We begin with the raw amino-acid sequence, 603 residues long: Glutamyl-tRNA(Gln) amidotransferase subunit E (603 aa).

This sequence belongs to the GatB/GatE family. GatE subfamily. As to quaternary structure, heterodimer of GatD and GatE.

The catalysed reaction is L-glutamyl-tRNA(Gln) + L-glutamine + ATP + H2O = L-glutaminyl-tRNA(Gln) + L-glutamate + ADP + phosphate + H(+). Its function is as follows. Allows the formation of correctly charged Gln-tRNA(Gln) through the transamidation of misacylated Glu-tRNA(Gln) in organisms which lack glutaminyl-tRNA synthetase. The reaction takes place in the presence of glutamine and ATP through an activated gamma-phospho-Glu-tRNA(Gln). The GatDE system is specific for glutamate and does not act on aspartate. In Thermoplasma acidophilum (strain ATCC 25905 / DSM 1728 / JCM 9062 / NBRC 15155 / AMRC-C165), this protein is Glutamyl-tRNA(Gln) amidotransferase subunit E.